We begin with the raw amino-acid sequence, 112 residues long: Colipase (112 aa).

The N-terminal stretch at 1 to 17 is a signal peptide; the sequence is MEKVLILLLVALAVAYA. Residues 18-22 constitute a propeptide, enterostatin, activation peptide; sequence VPDPR. 5 disulfides stabilise this stretch: cysteine 34/cysteine 45, cysteine 40/cysteine 56, cysteine 44/cysteine 78, cysteine 66/cysteine 86, and cysteine 80/cysteine 104.

The protein belongs to the colipase family. As to quaternary structure, forms a 1:1 stoichiometric complex with pancreatic lipase.

Its subcellular location is the secreted. In terms of biological role, colipase is a cofactor of pancreatic lipase. It allows the lipase to anchor itself to the lipid-water interface. Without colipase the enzyme is washed off by bile salts, which have an inhibitory effect on the lipase. Enterostatin has a biological activity as a satiety signal. This Bos taurus (Bovine) protein is Colipase (CLPS).